Here is a 1083-residue protein sequence, read N- to C-terminus: Carbamoyl phosphate synthase large chain (1083 aa).

The tract at residues 1-402 is carboxyphosphate synthetic domain; that stretch reads MPRRDDIKKI…SFQKALRGLE (402 aa). ATP-binding residues include arginine 129, arginine 169, glycine 175, glycine 176, glutamate 208, isoleucine 210, glutamate 215, glycine 241, valine 242, histidine 243, glutamine 285, and glutamate 299. An ATP-grasp 1 domain is found at 133 to 328; that stretch reads KQAMDKIGLD…IAKIAAKLAV (196 aa). Glutamine 285, glutamate 299, and asparagine 301 together coordinate Mg(2+). 3 residues coordinate Mn(2+): glutamine 285, glutamate 299, and asparagine 301. Positions 403–557 are oligomerization domain; sequence VGAFGFGSDP…YSTYESETEV (155 aa). Positions 558–944 are carbamoyl phosphate synthetic domain; it reads PAKGDKKRVV…AFAKSQLAAG (387 aa). An ATP-grasp 2 domain is found at 683 to 878; that stretch reads SSLIDELGLR…VANLATKVMA (196 aa). ATP-binding residues include arginine 719, arginine 758, leucine 760, glutamate 765, glycine 790, valine 791, histidine 792, serine 793, glutamine 833, and glutamate 849. Glutamine 833, glutamate 849, and asparagine 851 together coordinate Mg(2+). Glutamine 833, glutamate 849, and asparagine 851 together coordinate Mn(2+). Residues 945–1083 form the MGS-like domain; it reads TVLPESGKIF…SLQRRYAQNV (139 aa). Residues 945–1083 form an allosteric domain region; it reads TVLPESGKIF…SLQRRYAQNV (139 aa).

It belongs to the CarB family. Composed of two chains; the small (or glutamine) chain promotes the hydrolysis of glutamine to ammonia, which is used by the large (or ammonia) chain to synthesize carbamoyl phosphate. Tetramer of heterodimers (alpha,beta)4. It depends on Mg(2+) as a cofactor. Requires Mn(2+) as cofactor.

The enzyme catalyses hydrogencarbonate + L-glutamine + 2 ATP + H2O = carbamoyl phosphate + L-glutamate + 2 ADP + phosphate + 2 H(+). It carries out the reaction hydrogencarbonate + NH4(+) + 2 ATP = carbamoyl phosphate + 2 ADP + phosphate + 2 H(+). The protein operates within amino-acid biosynthesis; L-arginine biosynthesis; carbamoyl phosphate from bicarbonate: step 1/1. It functions in the pathway pyrimidine metabolism; UMP biosynthesis via de novo pathway; (S)-dihydroorotate from bicarbonate: step 1/3. Functionally, large subunit of the glutamine-dependent carbamoyl phosphate synthetase (CPSase). CPSase catalyzes the formation of carbamoyl phosphate from the ammonia moiety of glutamine, carbonate, and phosphate donated by ATP, constituting the first step of 2 biosynthetic pathways, one leading to arginine and/or urea and the other to pyrimidine nucleotides. The large subunit (synthetase) binds the substrates ammonia (free or transferred from glutamine from the small subunit), hydrogencarbonate and ATP and carries out an ATP-coupled ligase reaction, activating hydrogencarbonate by forming carboxy phosphate which reacts with ammonia to form carbamoyl phosphate. The sequence is that of Carbamoyl phosphate synthase large chain from Rhodopirellula baltica (strain DSM 10527 / NCIMB 13988 / SH1).